A 338-amino-acid chain; its full sequence is MVLTLLKAKPERKLAKQICKVVLDHFEKQYSKELGDAWNTVRDILTSPSCWQYAVLLNRFNYPFELEKDLHLKGYHSLLQGSLPYYPKSMKCYLSRTPHRMPSERHQTGNLKKYYLLNAASLLPVLALELRDGEKVLDLCAAPGGKSLALLQCAYPGYLHCNEYDSLRLRWLRQTLESFIPQPLVNVIKVSELDGREMGDAQPETFDKVLVDAPCSNDRSWLFSSDSQKAACRISQRRNLPLLQMELLRSAIKALRPGGLLVYSTCTLSKAENQDVISEVLNSYSNIMPVDIKEMARTCSRDFTFAPTGQECGLLVIPDKGKAWGPMYVAKLKKSWTT.

S-adenosyl-L-methionine contacts are provided by residues 140–146, Glu163, Asp194, and Asp212; that span reads CAAPGGK. Cys266 functions as the Nucleophile in the catalytic mechanism.

The protein belongs to the class I-like SAM-binding methyltransferase superfamily. RsmB/NOP family.

Its subcellular location is the mitochondrion matrix. It catalyses the reaction cytidine(34) in mitochondrial tRNA + S-adenosyl-L-methionine = 5-methylcytidine(34) in mitochondrial tRNA + S-adenosyl-L-homocysteine + H(+). Its function is as follows. Mitochondrial tRNA methyltransferase that mediates methylation of cytosine to 5-methylcytosine (m5C) at position 34 of mt-tRNA(Met). mt-tRNA(Met) methylation at cytosine(34) takes place at the wobble position of the anticodon and initiates the formation of 5-formylcytosine (f(5)c) at this position. mt-tRNA(Met) containing the f(5)c modification at the wobble position enables recognition of the AUA codon in addition to the AUG codon, expanding codon recognition in mitochondrial translation. This is tRNA (cytosine(34)-C(5))-methyltransferase, mitochondrial from Bos taurus (Bovine).